The chain runs to 138 residues: Transcription antitermination protein NusB (138 aa).

This sequence belongs to the NusB family.

Functionally, involved in transcription antitermination. Required for transcription of ribosomal RNA (rRNA) genes. Binds specifically to the boxA antiterminator sequence of the ribosomal RNA (rrn) operons. This is Transcription antitermination protein NusB from Coxiella burnetii (strain CbuK_Q154) (Coxiella burnetii (strain Q154)).